A 462-amino-acid polypeptide reads, in one-letter code: 3-isopropylmalate dehydratase large subunit (462 aa).

[4Fe-4S] cluster-binding residues include C337, C397, and C400.

Belongs to the aconitase/IPM isomerase family. LeuC type 1 subfamily. In terms of assembly, heterodimer of LeuC and LeuD. Requires [4Fe-4S] cluster as cofactor.

The enzyme catalyses (2R,3S)-3-isopropylmalate = (2S)-2-isopropylmalate. Its pathway is amino-acid biosynthesis; L-leucine biosynthesis; L-leucine from 3-methyl-2-oxobutanoate: step 2/4. Catalyzes the isomerization between 2-isopropylmalate and 3-isopropylmalate, via the formation of 2-isopropylmaleate. This is 3-isopropylmalate dehydratase large subunit from Listeria monocytogenes serovar 1/2a (strain ATCC BAA-679 / EGD-e).